We begin with the raw amino-acid sequence, 150 residues long: Large ribosomal subunit protein bL9 (150 aa).

This sequence belongs to the bacterial ribosomal protein bL9 family.

Its function is as follows. Binds to the 23S rRNA. This chain is Large ribosomal subunit protein bL9, found in Moorella thermoacetica (strain ATCC 39073 / JCM 9320).